The sequence spans 234 residues: Eosinophil granule major basic protein 2 (234 aa).

A signal peptide spans 1–15 (MKLLLLLALLVGAVS). Positions 16–115 (TRHLNVDTSS…VKFEGSPGCK (100 aa)) are cleaved as a propeptide — acidic. The interval 26-96 (LQSLQGEESL…SSELDMGPED (71 aa)) is disordered. O-linked (Xyl...) (glycosaminoglycan) serine glycosylation is present at serine 69. Acidic residues predominate over residues 71–94 (SEDDPEEEEEEKEMESSSELDMGP). A C-type lectin domain is found at 133–234 (SVCQRCFRGN…GVRRAFSCSY (102 aa)). Cystine bridges form between cysteine 135–cysteine 232 and cysteine 209–cysteine 224.

In terms of processing, nitrated.

It localises to the cytoplasmic granule. Functionally, MBP may play some important roles in the allergic reactions and inflammations, since MBP is capable of releasing histamine from mast cells and damaging the epithelial cells of bronchial tubes. Antiparasitic and antibiotic. This is Eosinophil granule major basic protein 2 (MBP2) from Cavia porcellus (Guinea pig).